The chain runs to 664 residues: Translation factor GUF1, mitochondrial (664 aa).

The region spanning 63–246 (SNYRNFSIVA…SIINNIPPPQ (184 aa)) is the tr-type G domain. Residues 72–79 (AHVDHGKS), 139–143 (DTPGH), and 193–196 (NKID) contribute to the GTP site.

This sequence belongs to the TRAFAC class translation factor GTPase superfamily. Classic translation factor GTPase family. LepA subfamily.

The protein resides in the mitochondrion inner membrane. It carries out the reaction GTP + H2O = GDP + phosphate + H(+). Functionally, promotes mitochondrial protein synthesis. May act as a fidelity factor of the translation reaction, by catalyzing a one-codon backward translocation of tRNAs on improperly translocated ribosomes. Binds to mitochondrial ribosomes in a GTP-dependent manner. In Clavispora lusitaniae (strain ATCC 42720) (Yeast), this protein is Translation factor GUF1, mitochondrial.